We begin with the raw amino-acid sequence, 446 residues long: MTRRAVSRKRRAAPGTGPGEQSDWDHSAHKRKRLPPEKKSLVFYLKSRELKPHNDSSYLRLLRGHAACTLPGILSEREFHLGTLNKVFASQWLNHRQVVCGTKCNTLFVVDVQTGQITKIPILKDREPLSGSHQSCGIHAIEINPSRTLLATGGDNPNSIAVYRLPTLDPVCVGDGGHNDWIFSIAWISDTMAVSGSRDGSMALWEMTEEILSKSDFQHGLSRVPVYAHISHKALKDIPKESSNPVNCKVRALAFNSKNKELGAVSLDGFFHLWKAELTLAKLLSTKLPYCRENVCLAYGLEWSLYAVGSQAHVSFLDPRQPPQCAKSVYCREQGSGIRSVSFYEHIVTVGTGQGALLFYDIRAQRFLEDSTGSCRNSKYKGDLLKLSTGKGWLNHNEMWMNYFSDIDCCPNAVYTHCYDSSGTKLFVAGGPLPTGLHGNYAGLWS.

Positions 1 to 12 (MTRRAVSRKRRA) are enriched in basic residues. Residues 1-33 (MTRRAVSRKRRAAPGTGPGEQSDWDHSAHKRKR) form a disordered region. 4 WD repeats span residues 132–173 (SHQS…PVCV), 177–215 (GHND…LSKS), 245–284 (PVNC…AKLL), and 333–370 (EQGS…FLED).

It belongs to the WD repeat DCAF12 family. As to quaternary structure, component of the DCX(DCAF12) E3 ubiquitin ligase complex, at least composed of cul4 (cul4a or cul4b), ddb1, dcaf12 and rbx1.

The protein resides in the cytoplasm. It is found in the cytoskeleton. Its subcellular location is the microtubule organizing center. It localises to the centrosome. The protein localises to the nucleus. It functions in the pathway protein modification; protein ubiquitination. Its function is as follows. Substrate-recognition component of a DCX (DDB1-CUL4-X-box) E3 ubiquitin-protein ligase complex of the DesCEND (destruction via C-end degrons) pathway, which recognizes a C-degron located at the extreme C terminus of target proteins, leading to their ubiquitination and degradation. The C-degron recognized by the DesCEND pathway is usually a motif of less than ten residues and can be present in full-length proteins, truncated proteins or proteolytically cleaved forms. The DCX(DCAF12) complex specifically recognizes proteins with a diglutamate (Glu-Glu) at the C-terminus leading to their ubiquitination and degradation. Also directly recognizes the C-terminal glutamate-leucine (Glu-Leu) degron as an alternative degron in proteins leading to their ubiquitination and degradation. This Xenopus tropicalis (Western clawed frog) protein is DDB1- and CUL4-associated factor 12.